A 132-amino-acid chain; its full sequence is Interleukin-4 (132 aa).

The first 24 residues, methionine 1 to glycine 24, serve as a signal peptide directing secretion. N-linked (GlcNAc...) asparagine glycans are attached at residues asparagine 28, asparagine 45, asparagine 62, and asparagine 101. 2 disulfide bridges follow: cysteine 48/cysteine 84 and cysteine 70/cysteine 104.

The protein belongs to the IL-4/IL-13 family.

The protein localises to the secreted. Functionally, participates in at least several B-cell activation processes as well as of other cell types. It is a costimulator of DNA-synthesis. It induces the expression of class II MHC molecules on resting B-cells. It enhances both secretion and cell surface expression of IgE and IgG1. It also regulates the expression of the low affinity Fc receptor for IgE (CD23) on both lymphocytes and monocytes. Positively regulates IL31RA expression in macrophages. Stimulates autophagy in dendritic cells by interfering with mTORC1 signaling and through the induction of RUFY4. This is Interleukin-4 (IL4) from Ailuropoda melanoleuca (Giant panda).